Reading from the N-terminus, the 222-residue chain is MKFNFITLFPEKIQSYFSEGLQQKAIESGIFSINTIQLRDFSGNKHNRVDDTIYGGGPGMLLRVEPIHKALLSLGENKGIVILTSPSGIPFHQGIANKLKETGKPLTFISGYYEGVDHRVAEHLVDMEMSLGNYVISAGDLASICIADAVSRLLPGFLGAGESLLDESHNYPDVLEYPQFTKPSEYNGWKVPEVLLSGNHASILAWREQNRKKIDPDQERKL.

S-adenosyl-L-methionine contacts are provided by residues G111 and 131–136 (LGNYVI).

The protein belongs to the RNA methyltransferase TrmD family. Homodimer.

Its subcellular location is the cytoplasm. The catalysed reaction is guanosine(37) in tRNA + S-adenosyl-L-methionine = N(1)-methylguanosine(37) in tRNA + S-adenosyl-L-homocysteine + H(+). In terms of biological role, specifically methylates guanosine-37 in various tRNAs. In Leptospira borgpetersenii serovar Hardjo-bovis (strain JB197), this protein is tRNA (guanine-N(1)-)-methyltransferase.